The following is a 351-amino-acid chain: dTDP-glucose 4,6-dehydratase (351 aa).

Residues F12–I13, D32–T35, D58–I59, F80–S84, and T99 contribute to the NAD(+) site. A substrate-binding site is contributed by S84. T133 contacts substrate. D134 (proton donor) is an active-site residue. Active-site proton acceptor residues include E135 and Y158. Y158–K162 contacts NAD(+). Residue N187 participates in substrate binding. N188 is a binding site for NAD(+). Substrate contacts are provided by residues K197–L198, P213–Y215, R222, N257, and D289–H293.

The protein belongs to the NAD(P)-dependent epimerase/dehydratase family. dTDP-glucose dehydratase subfamily. In terms of assembly, homodimer. The cofactor is NAD(+).

It catalyses the reaction dTDP-alpha-D-glucose = dTDP-4-dehydro-6-deoxy-alpha-D-glucose + H2O. It participates in carbohydrate biosynthesis; dTDP-L-rhamnose biosynthesis. The protein operates within bacterial outer membrane biogenesis; LPS O-antigen biosynthesis. Functionally, catalyzes the dehydration of dTDP-D-glucose to form dTDP-6-deoxy-D-xylo-4-hexulose via a three-step process involving oxidation, dehydration and reduction. The sequence is that of dTDP-glucose 4,6-dehydratase (rfbB) from Xanthomonas campestris pv. campestris (strain B100).